We begin with the raw amino-acid sequence, 443 residues long: Chromosomal replication initiator protein DnaA (443 aa).

Residues 1–67 form a domain I, interacts with DnaA modulators region; sequence MDAWSRSLER…RELLAHFAGF (67 aa). The interval 67–105 is domain II; it reads FSDVFLEIGSRPRPVEAQNAPFSTPSAHVSSEPQVPFAG. The interval 106 to 323 is domain III, AAA+ region; that stretch reads NLDNHYTFAN…GALNTLTARA (218 aa). Residues Gly-151, Gly-153, Lys-154, and Thr-155 each coordinate ATP. The segment at 324 to 443 is domain IV, binds dsDNA; that stretch reads NFTGRAITTE…WDKLIRKLSE (120 aa).

This sequence belongs to the DnaA family. Oligomerizes as a right-handed, spiral filament on DNA at oriC.

The protein resides in the cytoplasm. Functionally, plays an essential role in the initiation and regulation of chromosomal replication. ATP-DnaA binds to the origin of replication (oriC) to initiate formation of the DNA replication initiation complex once per cell cycle. Binds the DnaA box (a 9 base pair repeat at the origin) and separates the double-stranded (ds)DNA. Forms a right-handed helical filament on oriC DNA; dsDNA binds to the exterior of the filament while single-stranded (ss)DNA is stabiized in the filament's interior. The ATP-DnaA-oriC complex binds and stabilizes one strand of the AT-rich DNA unwinding element (DUE), permitting loading of DNA polymerase. After initiation quickly degrades to an ADP-DnaA complex that is not apt for DNA replication. Binds acidic phospholipids. The sequence is that of Chromosomal replication initiator protein DnaA from Stenotrophomonas maltophilia (strain R551-3).